Reading from the N-terminus, the 202-residue chain is Small ribosomal subunit protein uS4c (202 aa).

In terms of domain architecture, S4 RNA-binding spans 90–154; it reads MRLDNIIFRL…SQSIITKNLN (65 aa).

It belongs to the universal ribosomal protein uS4 family. As to quaternary structure, part of the 30S ribosomal subunit. Contacts protein S5. The interaction surface between S4 and S5 is involved in control of translational fidelity.

It localises to the plastid. Its subcellular location is the chloroplast. Functionally, one of the primary rRNA binding proteins, it binds directly to 16S rRNA where it nucleates assembly of the body of the 30S subunit. In terms of biological role, with S5 and S12 plays an important role in translational accuracy. The protein is Small ribosomal subunit protein uS4c (rps4) of Ricciocarpos natans (Liverwort).